The primary structure comprises 745 residues: MGPFGALCLAWALLGVVRACPEPCACVDKYAHQFADCAYKELREVPEGLPANVTTLSLSANKITVLRRGAFVNVTQVTSLWLAHSEVRTVESGALAVLSQLKNLDLSHNLISNFPWSDLRNLSALQLLKMNHNRLGSLPRDALGALPDLRSLRINNNRLRTLEPGTFDALSALSHLQLYHNPFHCSCGLVWLQAWAASTRVSLPEPDSIACASPPELQGVPVHRLPALPCAPPSVRLSAEPPPEAPGTPLRAGLAFMLHCVAEGHPTPRLQWQLQIPGGTVVLVPPVLSKEEDGGDKVEDGEGDGDEDLPTQTEAPTPTPAPAWPAPPATPRFLALANGSLLVPLLSAKEAGIYTCRAHNELGTNSTSLRVTVAAAGPPKHAPGTGEEPDAQVPTSERKATTKGRSNSVLPFKPEGKTKGQGLARVSVLGEIEAELEETDEGEQMEGQIPADPMGEKHCGHGDPSRYVSNHAFNQSSDLKPHVFELGVIALDVAEREARVQLTPLAARWGPGPDGASGARRPGRRPLRLLYLCPAGGGTAVQWSRVEEGVNAYWFRGLRPGTNYSVCLALAGEACHVQVVFSTKKELPSLLVIVTVSVFLLVLATVPLLGAACCHLLAKHPGKPYRLILRPQAPDPMEKRIAADFDPRASYLESEKSYPARGEAGGEEPEEVPEEGLDEDVEQGDPSGDLQREESLAGCSLVESQSKANQEEFEAGSEYSDRLPLGAEAVNIAQEINGNYRQTAG.

Residues 1–19 (MGPFGALCLAWALLGVVRA) form the signal peptide. Residues 20–51 (CPEPCACVDKYAHQFADCAYKELREVPEGLPA) enclose the LRRNT domain. The Extracellular segment spans residues 20 to 589 (CPEPCACVDK…VFSTKKELPS (570 aa)). 2 N-linked (GlcNAc...) asparagine glycosylation sites follow: Asn52 and Asn73. LRR repeat units lie at residues 52–73 (NVTT…AFVN), 76–97 (QVTS…ALAV), 100–123 (QLKN…RNLS), 124–145 (ALQL…ALGA), and 148–169 (DLRS…TFDA). An N-linked (GlcNAc...) asparagine glycan is attached at Asn121. Residues 181–232 (NPFHCSCGLVWLQAWAASTRVSLPEPDSIACASPPELQGVPVHRLPALPCAP) enclose the LRRCT domain. The Ig-like domain maps to 233-372 (PSVRLSAEPP…GTNSTSLRVT (140 aa)). A disulfide bridge links Cys260 with Cys356. The span at 290-300 (KEEDGGDKVED) shows a compositional bias: basic and acidic residues. Positions 290–328 (KEEDGGDKVEDGEGDGDEDLPTQTEAPTPTPAPAWPAPP) are disordered. Pro residues predominate over residues 317–328 (TPTPAPAWPAPP). Asn338 and Asn365 each carry an N-linked (GlcNAc...) asparagine glycan. Residues 376–423 (AGPPKHAPGTGEEPDAQVPTSERKATTKGRSNSVLPFKPEGKTKGQGL) form a disordered region. 2 N-linked (GlcNAc...) asparagine glycosylation sites follow: Asn474 and Asn563. The helical transmembrane segment at 590 to 610 (LLVIVTVSVFLLVLATVPLLG) threads the bilayer. The Cytoplasmic segment spans residues 611 to 745 (AACCHLLAKH…INGNYRQTAG (135 aa)). Positions 654–697 (SEKSYPARGEAGGEEPEEVPEEGLDEDVEQGDPSGDLQREESLA) are disordered. Positions 665–683 (GGEEPEEVPEEGLDEDVEQ) are enriched in acidic residues. At Tyr719 the chain carries Phosphotyrosine. The residue at position 720 (Ser720) is a Phosphoserine.

In terms of assembly, homomultimer. Interacts with NTRK1/TrkA. At 11.5 dpc, expressed in spinal nerves, their roots and the ventral spinal cord. At 12.5 dpc, detected in the ventral spinal cord, dorsal root ganglia (DRG), dorsal and ventral roots and sympathetic chain ganglia. At 12.5 dpc, expressed in almost all motor neurons which also express RET and in almost all DRG sensory neurons which also express NTRK1. At 18.5 dpc, expressed only in a subset of NTRK1-expressing neurons but still expressed in nearly all RET-expressing neurons.

Its subcellular location is the cell membrane. Required for axon extension during neural development. This chain is Immunoglobulin superfamily containing leucine-rich repeat protein 2 (Islr2), found in Mus musculus (Mouse).